The primary structure comprises 375 residues: Carbamoyl phosphate synthase small chain (375 aa).

The segment at 1-184 (MVSLYLENGL…LDYKPFDEKT (184 aa)) is CPSase. Residues Ser-44, Gly-240, and Gly-242 each coordinate L-glutamine. Positions 188–375 (IIAVLDFGAK…KEFVELLKDF (188 aa)) constitute a Glutamine amidotransferase type-1 domain. The Nucleophile role is filled by Cys-268. Residues Leu-269, Gln-272, Asn-310, and Tyr-313 each contribute to the L-glutamine site. Residues His-351 and Glu-353 contribute to the active site.

The protein belongs to the CarA family. Composed of two chains; the small (or glutamine) chain promotes the hydrolysis of glutamine to ammonia, which is used by the large (or ammonia) chain to synthesize carbamoyl phosphate. Tetramer of heterodimers (alpha,beta)4.

It carries out the reaction hydrogencarbonate + L-glutamine + 2 ATP + H2O = carbamoyl phosphate + L-glutamate + 2 ADP + phosphate + 2 H(+). It catalyses the reaction L-glutamine + H2O = L-glutamate + NH4(+). Its pathway is amino-acid biosynthesis; L-arginine biosynthesis; carbamoyl phosphate from bicarbonate: step 1/1. The protein operates within pyrimidine metabolism; UMP biosynthesis via de novo pathway; (S)-dihydroorotate from bicarbonate: step 1/3. Its function is as follows. Small subunit of the glutamine-dependent carbamoyl phosphate synthetase (CPSase). CPSase catalyzes the formation of carbamoyl phosphate from the ammonia moiety of glutamine, carbonate, and phosphate donated by ATP, constituting the first step of 2 biosynthetic pathways, one leading to arginine and/or urea and the other to pyrimidine nucleotides. The small subunit (glutamine amidotransferase) binds and cleaves glutamine to supply the large subunit with the substrate ammonia. The polypeptide is Carbamoyl phosphate synthase small chain (Helicobacter pylori (strain ATCC 700392 / 26695) (Campylobacter pylori)).